The primary structure comprises 445 residues: MGKGDALTPKQIANKIKAKGLQRLRWYCQLCEKQCRDENGFKCHISSESHMRQMEVFSNKSSFIVSQYSKEFEEDFLRIMSRQFINSRVPANQVYAEYIKDRHHIHMNATEWTSLTEFVKYLGKTSKCEVEETPKGWFIRYINRDPEYVMRKVSEEKKEKAELNEEERQRLQIEKQIKELNKNKIEQDEIKPTELSKEDLEKMSLLELNIKSTTNTTTTTTNTTTTTTNKNIFDKLKTNDNNSSNNNYNDQTNPKPYAKKMSAIEEIMFKEKEKERQQKEKLEFEKQQQQQQQQQQQQQQQQQQQQQQQQQQQQQQQQQQQQLNSNNNNNEEKPWIIKDIVIKIIDKELANGKYFKQKGYIVSVENEFLAKVKLLDSGDILKIDQTFLETVIPQIGSTVIIVNGKYRGKEATIKNVNFDDFNAKLYIKDNDITITLPYESFSKQY.

The C2H2-type zinc finger occupies 26–50 (WYCQLCEKQCRDENGFKCHISSESH). Composition is skewed to low complexity over residues 215-229 (NTTT…TTTN) and 239-253 (NDNN…DQTN). The tract at residues 215-256 (NTTTTTTNTTTTTTNKNIFDKLKTNDNNSSNNNYNDQTNPKP) is disordered.

This sequence belongs to the KIN17 family.

This Dictyostelium discoideum (Social amoeba) protein is KIN17-like protein.